Reading from the N-terminus, the 432-residue chain is Ubiquitin-like modifier-activating enzyme 5 (432 aa).

Residues 25–47 (ETKKNQTPSVLKGPTVSQERPSA) form a disordered region. Residues 29 to 44 (NQTPSVLKGPTVSQER) show a composition bias toward polar residues. ATP contacts are provided by G96, D117, K140, N163, and N196. Residues C238 and C241 each coordinate Zn(2+). Catalysis depends on C262, which acts as the Glycyl thioester intermediate. The Zn(2+) site is built by C315 and C320. The interval 363-406 (DTTEAPSSSAATEVAPGLKFAYEPTQTPKKNSSDNLKLSPSQAV) is disordered. Residues 386–406 (PTQTPKKNSSDNLKLSPSQAV) show a composition bias toward polar residues.

This sequence belongs to the ubiquitin-activating E1 family. UBA5 subfamily. In terms of assembly, interacts with ufc-1.

Its function is as follows. E1-like enzyme which activates ufm-1. Required for interaction between ufm-1 and ufc-1. This chain is Ubiquitin-like modifier-activating enzyme 5, found in Caenorhabditis briggsae.